The primary structure comprises 201 residues: Large ribosomal subunit protein uL4 (201 aa).

The interval 45–66 (AQKSRAEVVGSNKKPWRQKGTG) is disordered.

It belongs to the universal ribosomal protein uL4 family. In terms of assembly, part of the 50S ribosomal subunit.

Functionally, one of the primary rRNA binding proteins, this protein initially binds near the 5'-end of the 23S rRNA. It is important during the early stages of 50S assembly. It makes multiple contacts with different domains of the 23S rRNA in the assembled 50S subunit and ribosome. Forms part of the polypeptide exit tunnel. The chain is Large ribosomal subunit protein uL4 from Baumannia cicadellinicola subsp. Homalodisca coagulata.